The sequence spans 485 residues: CCA-adding enzyme (485 aa).

Residues serine 53 and arginine 56 each contribute to the ATP site. 2 residues coordinate CTP: serine 53 and arginine 56. Mg(2+)-binding residues include aspartate 65, aspartate 67, and aspartate 124. The ATP site is built by histidine 146, lysine 164, and tyrosine 173. The CTP site is built by histidine 146, lysine 164, and tyrosine 173.

The protein belongs to the tRNA nucleotidyltransferase/poly(A) polymerase family. Archaeal CCA-adding enzyme subfamily. As to quaternary structure, homodimer. Requires Mg(2+) as cofactor.

It carries out the reaction a tRNA precursor + 2 CTP + ATP = a tRNA with a 3' CCA end + 3 diphosphate. The enzyme catalyses a tRNA with a 3' CCA end + 2 CTP + ATP = a tRNA with a 3' CCACCA end + 3 diphosphate. Functionally, catalyzes the addition and repair of the essential 3'-terminal CCA sequence in tRNAs without using a nucleic acid template. Adds these three nucleotides in the order of C, C, and A to the tRNA nucleotide-73, using CTP and ATP as substrates and producing inorganic pyrophosphate. tRNA 3'-terminal CCA addition is required both for tRNA processing and repair. Also involved in tRNA surveillance by mediating tandem CCA addition to generate a CCACCA at the 3' terminus of unstable tRNAs. While stable tRNAs receive only 3'-terminal CCA, unstable tRNAs are marked with CCACCA and rapidly degraded. The chain is CCA-adding enzyme from Methanopyrus kandleri (strain AV19 / DSM 6324 / JCM 9639 / NBRC 100938).